The chain runs to 109 residues: Spermidine export protein MdtI (109 aa).

Helical transmembrane passes span 6 to 26, 36 to 56, 64 to 84, and 88 to 108; these read FYPI…NILL, WLGI…AQAV, AYAM…WILF, and LNYK…MIKL.

It belongs to the drug/metabolite transporter (DMT) superfamily. Small multidrug resistance (SMR) (TC 2.A.7.1) family. MdtI subfamily. In terms of assembly, forms a complex with MdtJ.

The protein resides in the cell inner membrane. Functionally, catalyzes the excretion of spermidine. This chain is Spermidine export protein MdtI, found in Yersinia pseudotuberculosis serotype I (strain IP32953).